The following is a 225-amino-acid chain: Cytochrome c oxidase subunit 2 (225 aa).

Residues 1–25 are Mitochondrial intermembrane-facing; it reads MSTWMMFMFQESNSFYADNLVSFHN. Residues 26 to 47 traverse the membrane as a helical segment; that stretch reads LVMMIIIMISTLTIYIIFDLFM. Over 48-62 the chain is Mitochondrial matrix; the sequence is NKFSNLFLLKNHNIE. A helical membrane pass occupies residues 63–82; the sequence is IIWTIVPIVILLIICFPSLK. The Mitochondrial intermembrane segment spans residues 83-225; the sequence is ILYLIDEIIN…FFLNWINKQN (143 aa). Cu cation contacts are provided by His-159, Cys-194, Glu-196, Cys-198, His-202, and Met-205. Glu-196 serves as a coordination point for Mg(2+).

Belongs to the cytochrome c oxidase subunit 2 family. Component of the cytochrome c oxidase (complex IV, CIV), a multisubunit enzyme composed of a catalytic core of 3 subunits and several supernumerary subunits. The complex exists as a monomer or a dimer and forms supercomplexes (SCs) in the inner mitochondrial membrane with ubiquinol-cytochrome c oxidoreductase (cytochrome b-c1 complex, complex III, CIII). The cofactor is Cu cation.

It localises to the mitochondrion inner membrane. The enzyme catalyses 4 Fe(II)-[cytochrome c] + O2 + 8 H(+)(in) = 4 Fe(III)-[cytochrome c] + 2 H2O + 4 H(+)(out). Component of the cytochrome c oxidase, the last enzyme in the mitochondrial electron transport chain which drives oxidative phosphorylation. The respiratory chain contains 3 multisubunit complexes succinate dehydrogenase (complex II, CII), ubiquinol-cytochrome c oxidoreductase (cytochrome b-c1 complex, complex III, CIII) and cytochrome c oxidase (complex IV, CIV), that cooperate to transfer electrons derived from NADH and succinate to molecular oxygen, creating an electrochemical gradient over the inner membrane that drives transmembrane transport and the ATP synthase. Cytochrome c oxidase is the component of the respiratory chain that catalyzes the reduction of oxygen to water. Electrons originating from reduced cytochrome c in the intermembrane space (IMS) are transferred via the dinuclear copper A center (CU(A)) of subunit 2 and heme A of subunit 1 to the active site in subunit 1, a binuclear center (BNC) formed by heme A3 and copper B (CU(B)). The BNC reduces molecular oxygen to 2 water molecules using 4 electrons from cytochrome c in the IMS and 4 protons from the mitochondrial matrix. The chain is Cytochrome c oxidase subunit 2 (COII) from Apis koschevnikovi (Koschevnikov's honey bee).